The following is a 160-amino-acid chain: Major allergen Pru av 1 (160 aa).

It belongs to the BetVI family.

In Prunus avium (Cherry), this protein is Major allergen Pru av 1 (PRUA1).